The primary structure comprises 144 residues: MKIATKYHGDIEIHEKDIVRFEQGIPGFLEEKQFVLLPLEDTPFIILQSVNTPALGFVLIEPFSYFPTYEIELDDNTLEQLQITGEQDVALYVILTVADPFDDTTANLQAPIVINARKRLGKQVILTNTNYKTKHRLFPEKVAK.

The protein belongs to the FliW family. As to quaternary structure, interacts with translational regulator CsrA and flagellin(s).

It localises to the cytoplasm. Its function is as follows. Acts as an anti-CsrA protein, binds CsrA and prevents it from repressing translation of its target genes, one of which is flagellin. Binds to flagellin and participates in the assembly of the flagellum. The polypeptide is Flagellar assembly factor FliW (Geobacillus kaustophilus (strain HTA426)).